Here is a 398-residue protein sequence, read N- to C-terminus: MSISKSLVLNEIKKFSPSHIIIGYSGGVDSSVLLNISKELDIPLIAIYINHNLHRDSLKWQIHCQQTCQRYNLQFISHSLDKVPKGESFEAWASKQRMAFFQKIMQPYSKPLLLLGHHQDDQAETFLIQAIRGSGLAGLAGIPHYKELHHGGVLRPLLKYSKIEIEEFAKLNNISYIYDDSNEDIKYRRNLIRNQIIPILQQVNPNIGQTLSRSANICAESNNILQKLLTERLQSISQDTNLIISELIKLDDDIQKSLLHLWFKQNTQQSLKSKQIKELHLAINNPSTGWQIDISNYYQIHIQYNQLIIKYPTTINDMSKEDIISWLSKNLNEEIDLTKIVIRDRKPDDKCKYRGRNKPNKLKILFQELQIPTTERSKAKIILKDQQIIAVYPFFICG.

Position 25–30 (25–30) interacts with ATP; it reads SGGVDS.

Belongs to the tRNA(Ile)-lysidine synthase family.

It localises to the cytoplasm. It catalyses the reaction cytidine(34) in tRNA(Ile2) + L-lysine + ATP = lysidine(34) in tRNA(Ile2) + AMP + diphosphate + H(+). In terms of biological role, ligates lysine onto the cytidine present at position 34 of the AUA codon-specific tRNA(Ile) that contains the anticodon CAU, in an ATP-dependent manner. Cytidine is converted to lysidine, thus changing the amino acid specificity of the tRNA from methionine to isoleucine. The sequence is that of tRNA(Ile)-lysidine synthase from Francisella tularensis subsp. novicida (strain U112).